Reading from the N-terminus, the 320-residue chain is Olfactory receptor 51E2 (320 aa).

Residues 1-27 are Extracellular-facing; that stretch reads MSSCNFTHATFLLIGIPGLEEAHFWFG. N-linked (GlcNAc...) asparagine glycosylation is present at N5. Residues 28–48 form a helical membrane-spanning segment; sequence FPLLSMYAVALFGNCIVVFIV. The Cytoplasmic segment spans residues 49–53; that stretch reads RTERS. Residues 54–74 form a helical membrane-spanning segment; sequence LHAPMYLFLCMLAAIDLALST. Topologically, residues 75–98 are extracellular; that stretch reads STMPKILALFWFDSREITFDACLA. The cysteines at positions 96 and 178 are disulfide-linked. A helical transmembrane segment spans residues 99-119; that stretch reads QMFFIHTLSAIESTILLAMAF. Residues 120 to 141 lie on the Cytoplasmic side of the membrane; that stretch reads DRYVAICHPLRHAAVLNNTVTV. Residues 142 to 162 form a helical membrane-spanning segment; sequence QIGMVALVRGSLFFFPLPLLI. Residues 163–200 lie on the Extracellular side of the membrane; it reads KRLAFCHSNVLSHSYCVHQDVMKLAYTDTLPNVVYGLT. The helical transmembrane segment at 201–221 threads the bilayer; it reads AILLVMGVDVMFISLSYFLII. Over 222-239 the chain is Cytoplasmic; that stretch reads RTVLQLPSKSERAKAFGT. Residues 240–260 traverse the membrane as a helical segment; it reads CVSHISVVLAFYVPLIGLSVV. The Extracellular segment spans residues 261–269; it reads HRFGNSLDP. A helical transmembrane segment spans residues 270 to 290; it reads IVHVLMGDVYLLLPPVINPII. The Cytoplasmic portion of the chain corresponds to 291–320; it reads YGAKTKQIRTRVLAMFKISCDKDIEAGGNT.

Belongs to the G-protein coupled receptor 1 family. As to expression, in brain, expressed in medulla oblongata by cells close to the fourth ventricle, in the area postrema, the nucleus tractus solitarius. Expressed in olfactory epithelium and vomeronasal organ. Expressed in kidney by large renal vessels, renal afferent arterioles, and extrarenal vascular beds. In small resistance vessels the expression is restricted to cells of the juxtaglomerular afferent arteriole, which mediate renin secretion. Also detected in small blood vessels in a variety of tissues including heart, diaphragm, skeletal muscle, and skin. In the heart, esophagus, and stomach it is detected in axons of autonomic neurons and neurons of the enteric plexus. Also detected in colon and liver. Expressed in the glomus cells of the carotid body.

It is found in the cell membrane. It localises to the early endosome membrane. Functionally, olfactory receptor. The activity of this receptor is probably mediated by G-proteins which induce elevation of intracellular Ca(2+), cAMP and activation of phosphorylation of the protein kinases PKA and MAPK3/MAPK1. Activation of OR51E2 may affect melanocyte proliferation, differentiation, and melanogenesis and may increase proliferation and migration of primary retinal pigment epithelial (RPE) cells. Activated by the short chain fatty acids (SCFA), acetate and propionate. In response to SCFA, may positively regulate renin secretion and increase blood pressure. May also be activated by steroid hormones and regulate cell proliferation. Activated by L-lactate in glomus cells. The protein is Olfactory receptor 51E2 (Or51e2) of Mus musculus (Mouse).